We begin with the raw amino-acid sequence, 362 residues long: Methylthioribose-1-phosphate isomerase (362 aa).

Residues 53-55, R90, and Q201 each bind substrate; that span reads RGA. The active-site Proton donor is D241. 251–252 contacts substrate; it reads NK.

It belongs to the eIF-2B alpha/beta/delta subunits family. MtnA subfamily.

The catalysed reaction is 5-(methylsulfanyl)-alpha-D-ribose 1-phosphate = 5-(methylsulfanyl)-D-ribulose 1-phosphate. It participates in amino-acid biosynthesis; L-methionine biosynthesis via salvage pathway; L-methionine from S-methyl-5-thio-alpha-D-ribose 1-phosphate: step 1/6. Catalyzes the interconversion of methylthioribose-1-phosphate (MTR-1-P) into methylthioribulose-1-phosphate (MTRu-1-P). The polypeptide is Methylthioribose-1-phosphate isomerase (Dechloromonas aromatica (strain RCB)).